A 181-amino-acid polypeptide reads, in one-letter code: Transcription termination/antitermination protein NusG (181 aa).

One can recognise a KOW domain in the interval 130 to 161; that stretch reads PGELVRVSDGPFADFNGVVEEVDYEKSRLKVS.

Belongs to the NusG family. In terms of assembly, monomer. Interacts with the transcription termination factor Rho and with RNA polymerase.

In terms of biological role, participates in transcription elongation, termination and antitermination. In the absence of Rho, increases the rate of transcription elongation by the RNA polymerase (RNAP), probably by partially suppressing pausing. In the presence of Rho, modulates most Rho-dependent termination events by interacting with the RNAP to render the complex more susceptible to the termination activity of Rho. May be required to overcome a kinetic limitation of Rho to function at certain terminators. Also involved in ribosomal RNA transcriptional antitermination. The protein is Transcription termination/antitermination protein NusG of Yersinia pestis.